A 795-amino-acid chain; its full sequence is Levansucrase (795 aa).

A signal peptide spans 1 to 36; that stretch reads METKVRKKMYKKGKFWVVATITTAMLTGIGLSSVQA. Polar residues-rich tracts occupy residues 42–66 and 112–130; these read TQVS…SAAE and QAAT…GQTN. 2 disordered regions span residues 42-83 and 103-138; these read TQVS…NPAA and ESKA…ATKE. 3 residues coordinate sucrose: W245, D246, and S315. Residue D246 is the Nucleophile of the active site. Residue D394 coordinates Ca(2+). Residues R399 and D400 each contribute to the sucrose site. Ca(2+) contacts are provided by Q425, N464, and D496. E497 is a sucrose binding site. The active-site Proton donor/acceptor is the E499. Position 517 (R517) interacts with sucrose. A helical membrane pass occupies residues 774–794; sequence GNSFFAALLALFSAFCVSIGF.

It belongs to the glycosyl hydrolase 68 family.

It localises to the cell membrane. Its subcellular location is the cell surface. The catalysed reaction is [6)-beta-D-fructofuranosyl-(2-&gt;](n) alpha-D-glucopyranoside + sucrose = [6)-beta-D-fructofuranosyl-(2-&gt;](n+1) alpha-D-glucopyranoside + D-glucose. With respect to regulation, ca(2+) may play an important structural role and promote stability of levansucrase. Catalyzes the synthesis of levan, a fructose polymer, by transferring the fructosyl moiety from sucrose to a growing acceptor molecule. Also displays sucrose hydrolase activity. The polypeptide is Levansucrase (Streptococcus mutans serotype c (strain ATCC 700610 / UA159)).